The sequence spans 501 residues: Cobyric acid synthase (501 aa).

The GATase cobBQ-type domain occupies 252–443; the sequence is DLDVAVIDLD…LHGIFDNPYW (192 aa). Residue Cys333 is the Nucleophile of the active site. The active site involves His435.

The protein belongs to the CobB/CobQ family. CobQ subfamily.

The protein operates within cofactor biosynthesis; adenosylcobalamin biosynthesis. Its function is as follows. Catalyzes amidations at positions B, D, E, and G on adenosylcobyrinic A,C-diamide. NH(2) groups are provided by glutamine, and one molecule of ATP is hydrogenolyzed for each amidation. The sequence is that of Cobyric acid synthase from Limosilactobacillus reuteri (strain DSM 20016) (Lactobacillus reuteri).